The sequence spans 134 residues: Large ribosomal subunit protein eL14 (134 aa).

It belongs to the eukaryotic ribosomal protein eL14 family. As to quaternary structure, component of the large ribosomal subunit (LSU). Mature yeast ribosomes consist of a small (40S) and a large (60S) subunit. The 40S small subunit contains 1 molecule of ribosomal RNA (18S rRNA) and at least 33 different proteins. The large 60S subunit contains 3 rRNA molecules (25S, 5.8S and 5S rRNA) and at least 46 different proteins.

It localises to the cytoplasm. It is found in the nucleus. Component of the ribosome, a large ribonucleoprotein complex responsible for the synthesis of proteins in the cell. The small ribosomal subunit (SSU) binds messenger RNAs (mRNAs) and translates the encoded message by selecting cognate aminoacyl-transfer RNA (tRNA) molecules. The large subunit (LSU) contains the ribosomal catalytic site termed the peptidyl transferase center (PTC), which catalyzes the formation of peptide bonds, thereby polymerizing the amino acids delivered by tRNAs into a polypeptide chain. The nascent polypeptides leave the ribosome through a tunnel in the LSU and interact with protein factors that function in enzymatic processing, targeting, and the membrane insertion of nascent chains at the exit of the ribosomal tunnel. This chain is Large ribosomal subunit protein eL14 (rpl14), found in Schizosaccharomyces pombe (strain 972 / ATCC 24843) (Fission yeast).